Here is a 211-residue protein sequence, read N- to C-terminus: MCPGNWLWASMTFMARFSRSSSRSPVRTRGNLEEMPTVQHPFLNVFELERLLYTGKTACNHADEVWPGLYLGDQDMANNRRELRRLGITHVLNASHSRWRGTPEAYEGLGIRYLGVEAHDSPAFDMSIHFQTAADFIHRALSQPGGKILVHCAVGVSRSATLVLAYLMLYHHLTLVEAIKKVKDHRGIIPNRGFLRQLLALDRRLRQGLEA.

Positions 60–207 constitute a Tyrosine-protein phosphatase domain; sequence NHADEVWPGL…LLALDRRLRQ (148 aa). Residue C152 is the Phosphocysteine intermediate of the active site.

Belongs to the protein-tyrosine phosphatase family. Non-receptor class dual specificity subfamily. As to quaternary structure, interacts with HSF4.

It localises to the cytoplasm. It is found in the nucleus. The protein resides in the golgi apparatus. The enzyme catalyses O-phospho-L-tyrosyl-[protein] + H2O = L-tyrosyl-[protein] + phosphate. The catalysed reaction is O-phospho-L-seryl-[protein] + H2O = L-seryl-[protein] + phosphate. It catalyses the reaction O-phospho-L-threonyl-[protein] + H2O = L-threonyl-[protein] + phosphate. Its function is as follows. Inactivates MAPK1 and MAPK3 which leads to dephosphorylation of heat shock factor protein 4 and a reduction in its DNA-binding activity. The chain is Dual specificity protein phosphatase 26 (DUSP26) from Pongo abelii (Sumatran orangutan).